The following is a 1030-amino-acid chain: Semaphorin-6A (1030 aa).

An N-terminal signal peptide occupies residues 1 to 18 (MRSEALLLYFTLLHFAGA). Residues 19 to 649 (GFPEDSEPIS…KGHDQLVPVT (631 aa)) lie on the Extracellular side of the membrane. A Sema domain is found at 24 to 512 (SEPISISHGN…FSTCVIKVPL (489 aa)). N-linked (GlcNAc...) asparagine glycans are attached at residues N33, N49, and N65. 4 disulfide bridges follow: C107-C117, C135-C144, C258-C369, and C283-C328. N282 is a glycosylation site (N-linked (GlcNAc...) asparagine). N-linked (GlcNAc...) asparagine glycosylation is found at N434 and N461. 4 cysteine pairs are disulfide-bonded: C477–C506, C515–C533, C521–C568, and C525–C542. A helical transmembrane segment spans residues 650-670 (LLAIAVILAFVMGAVFSGITV). Residues 671–1030 (YCVCDHRRKD…TSMKPNDACT (360 aa)) lie on the Cytoplasmic side of the membrane. Residue S698 is modified to Phosphoserine. Disordered stretches follow at residues 754-778 (ALPTPESTPTLQQKRKPSRGSREWE), 860-897 (SSKSPNHGVNLVENLDSLPPKVPQREASLGPPGASLSQ), and 912-1030 (YGVD…DACT). Over residues 920-936 (YPTNSLTRSHQATTLKR) the composition is skewed to polar residues. A compositionally biased stretch (low complexity) spans 937-952 (NNTNSSNSSHLSRNQS). S952 carries the post-translational modification Phosphoserine. Polar residues-rich tracts occupy residues 970 to 997 (QVHSSQPSGQAVTVSRQPSLNAYNSLTR) and 1018 to 1030 (PLSTSMKPNDACT).

It belongs to the semaphorin family. Active as a homodimer or oligomer. The SEMA6A homodimer interacts with a PLXNA2 homodimer, giving rise to a heterotetramer. Interacts with EVL. As to quaternary structure, (Microbial infection) Interacts with P.sordellii toxin TcsL; semaphorins SEMA6A and SEMA6B constitute the major host receptors for TcsL in the vascular endothelium.

It is found in the cell membrane. Its function is as follows. Cell surface receptor for PLXNA2 that plays an important role in cell-cell signaling. Required for normal granule cell migration in the developing cerebellum. Promotes reorganization of the actin cytoskeleton and plays an important role in axon guidance in the developing central nervous system. Can act as repulsive axon guidance cue. Has repulsive action towards migrating granular neurons. May play a role in channeling sympathetic axons into the sympathetic chains and controlling the temporal sequence of sympathetic target innervation. In terms of biological role, (Microbial infection) Acts as a receptor for P.sordellii toxin TcsL in the in the vascular endothelium. The sequence is that of Semaphorin-6A (SEMA6A) from Homo sapiens (Human).